A 666-amino-acid chain; its full sequence is Threonine--tRNA ligase (666 aa).

In terms of domain architecture, TGS spans 1-64 (MSDTVSLTFP…VDGKIEIVTR (64 aa)). Residues 245–553 (DHRKLGREMD…LIENFAGHMP (309 aa)) form a catalytic region. 3 residues coordinate Zn(2+): C347, H398, and H530.

The protein belongs to the class-II aminoacyl-tRNA synthetase family. As to quaternary structure, homodimer. Requires Zn(2+) as cofactor.

The protein localises to the cytoplasm. The catalysed reaction is tRNA(Thr) + L-threonine + ATP = L-threonyl-tRNA(Thr) + AMP + diphosphate + H(+). Functionally, catalyzes the attachment of threonine to tRNA(Thr) in a two-step reaction: L-threonine is first activated by ATP to form Thr-AMP and then transferred to the acceptor end of tRNA(Thr). Also edits incorrectly charged L-seryl-tRNA(Thr). In Allorhizobium ampelinum (strain ATCC BAA-846 / DSM 112012 / S4) (Agrobacterium vitis (strain S4)), this protein is Threonine--tRNA ligase.